A 176-amino-acid polypeptide reads, in one-letter code: Ribosome rescue factor SmrB (176 aa).

Residues 97–172 (LDMHGMTQQE…GDGALLVLLS (76 aa)) form the Smr domain.

Belongs to the SmrB family. In terms of assembly, associates with collided ribosomes, but not with correctly translating polysomes.

Its function is as follows. Acts as a ribosome collision sensor. Detects stalled/collided disomes (pairs of ribosomes where the leading ribosome is stalled and a second ribosome has collided with it) and endonucleolytically cleaves mRNA at the 5' boundary of the stalled ribosome. Stalled/collided disomes form a new interface (primarily via the 30S subunits) that binds SmrB. Cleaved mRNA becomes available for tmRNA ligation, leading to ribosomal subunit dissociation and rescue of stalled ribosomes. This is Ribosome rescue factor SmrB from Vibrio vulnificus (strain CMCP6).